We begin with the raw amino-acid sequence, 483 residues long: Probable glycine dehydrogenase (decarboxylating) subunit 2 (483 aa).

Lys-267 is modified (N6-(pyridoxal phosphate)lysine).

Belongs to the GcvP family. C-terminal subunit subfamily. As to quaternary structure, the glycine cleavage system is composed of four proteins: P, T, L and H. In this organism, the P 'protein' is a heterodimer of two subunits. Requires pyridoxal 5'-phosphate as cofactor.

The enzyme catalyses N(6)-[(R)-lipoyl]-L-lysyl-[glycine-cleavage complex H protein] + glycine + H(+) = N(6)-[(R)-S(8)-aminomethyldihydrolipoyl]-L-lysyl-[glycine-cleavage complex H protein] + CO2. In terms of biological role, the glycine cleavage system catalyzes the degradation of glycine. The P protein binds the alpha-amino group of glycine through its pyridoxal phosphate cofactor; CO(2) is released and the remaining methylamine moiety is then transferred to the lipoamide cofactor of the H protein. The chain is Probable glycine dehydrogenase (decarboxylating) subunit 2 from Kosmotoga olearia (strain ATCC BAA-1733 / DSM 21960 / TBF 19.5.1).